A 510-amino-acid polypeptide reads, in one-letter code: UDP-N-acetylmuramoyl-tripeptide--D-alanyl-D-alanine ligase (510 aa).

Position 136–142 (136–142 (GSSGKTS)) interacts with ATP.

The protein belongs to the MurCDEF family. MurF subfamily.

The protein localises to the cytoplasm. It carries out the reaction D-alanyl-D-alanine + UDP-N-acetyl-alpha-D-muramoyl-L-alanyl-gamma-D-glutamyl-meso-2,6-diaminopimelate + ATP = UDP-N-acetyl-alpha-D-muramoyl-L-alanyl-gamma-D-glutamyl-meso-2,6-diaminopimeloyl-D-alanyl-D-alanine + ADP + phosphate + H(+). The protein operates within cell wall biogenesis; peptidoglycan biosynthesis. Functionally, involved in cell wall formation. Catalyzes the final step in the synthesis of UDP-N-acetylmuramoyl-pentapeptide, the precursor of murein. The chain is UDP-N-acetylmuramoyl-tripeptide--D-alanyl-D-alanine ligase from Mycobacterium bovis (strain ATCC BAA-935 / AF2122/97).